A 363-amino-acid polypeptide reads, in one-letter code: MKYRIAITTGGTGGHVYPALAVAEQFHDKADLFFIGSQYGPEAEMVKTFNIPFYGLPVRGVLGRKWKAFSALYSMIKAIVKARKILQKCMPDIVVGFGSYASFAPLVAAKLKRIPTAIHEQNVRPGLANRMLARLADRVFLSVPDTLHIFTKKSKVRYTGNPIRQSIVDLHYKFEDTKNSSTRHLLVLGGSLGAIAINSIVVDGLSRLFSNRIVIRHQTGVHDWERVKEGYALYGRTNSQVTPFIDDMAEAYQWSDLVLCRAGATTIAELAAVGKPSILIPFPYATHDHQTYNAQFLVRVGAAVLIPEKNVVEVDVIEKIIALFNDRVTLVNMALAAHKHGRIDAATCVANEIIDLLSANAMK.

UDP-N-acetyl-alpha-D-glucosamine-binding positions include 12-14 (TGG), Asn122, Arg164, Ser191, Ile245, and Gln290.

Belongs to the glycosyltransferase 28 family. MurG subfamily.

Its subcellular location is the cell membrane. It carries out the reaction di-trans,octa-cis-undecaprenyl diphospho-N-acetyl-alpha-D-muramoyl-L-alanyl-D-glutamyl-meso-2,6-diaminopimeloyl-D-alanyl-D-alanine + UDP-N-acetyl-alpha-D-glucosamine = di-trans,octa-cis-undecaprenyl diphospho-[N-acetyl-alpha-D-glucosaminyl-(1-&gt;4)]-N-acetyl-alpha-D-muramoyl-L-alanyl-D-glutamyl-meso-2,6-diaminopimeloyl-D-alanyl-D-alanine + UDP + H(+). It functions in the pathway cell wall biogenesis; peptidoglycan biosynthesis. Its function is as follows. Cell wall formation. Catalyzes the transfer of a GlcNAc subunit on undecaprenyl-pyrophosphoryl-MurNAc-pentapeptide (lipid intermediate I) to form undecaprenyl-pyrophosphoryl-MurNAc-(pentapeptide)GlcNAc (lipid intermediate II). This chain is UDP-N-acetylglucosamine--N-acetylmuramyl-(pentapeptide) pyrophosphoryl-undecaprenol N-acetylglucosamine transferase, found in Lawsonia intracellularis (strain PHE/MN1-00).